We begin with the raw amino-acid sequence, 417 residues long: Serine hydroxymethyltransferase 2 (417 aa).

(6S)-5,6,7,8-tetrahydrofolate contacts are provided by residues Leu121 and 125-127 (GHL). An N6-(pyridoxal phosphate)lysine modification is found at Lys230. Residue 355–357 (SPF) participates in (6S)-5,6,7,8-tetrahydrofolate binding.

Belongs to the SHMT family. Homodimer. The cofactor is pyridoxal 5'-phosphate.

The protein resides in the cytoplasm. The catalysed reaction is (6R)-5,10-methylene-5,6,7,8-tetrahydrofolate + glycine + H2O = (6S)-5,6,7,8-tetrahydrofolate + L-serine. Its pathway is one-carbon metabolism; tetrahydrofolate interconversion. The protein operates within amino-acid biosynthesis; glycine biosynthesis; glycine from L-serine: step 1/1. Functionally, catalyzes the reversible interconversion of serine and glycine with tetrahydrofolate (THF) serving as the one-carbon carrier. This reaction serves as the major source of one-carbon groups required for the biosynthesis of purines, thymidylate, methionine, and other important biomolecules. Also exhibits THF-independent aldolase activity toward beta-hydroxyamino acids, producing glycine and aldehydes, via a retro-aldol mechanism. This Colwellia psychrerythraea (strain 34H / ATCC BAA-681) (Vibrio psychroerythus) protein is Serine hydroxymethyltransferase 2.